The chain runs to 675 residues: MKGYLTFVLHTHIPYVRKHGKWPFGEEWVFEAISETYIPLLMEFERLRDSGVKFGIVINVTPVLAEQLTDEYMKKAFEEYMERKLKAMEEDLKSGKYDEKAVSYMLNYFRKVYDYWKAINGDIIGKLRELQDQGYVEVITSAATHGYLPLLGRDEAIRAQIANGVATYEKHFGMKPKGIWLPECAYRPAGEWELPGGRKVKRQGIEKFLEEFGLRYFFVESRLIDEGPASNVYGEVLIADTEKTTLRPYWIKGSNVAVFARNRETGHQVWSAHYGYPGDFWYREFHKKAPKSGGQYWRITSKEVGLGEKEFYDPDKAMERVEEHARHFVSLVERLLREHEEKFGEKGIIVAPYDTELFGHWWFEGVKWLGRVLELLYQRGVETPTLSRFLEEYSGEKHEIELPEGSWGANSDHSTWWNEETEWTWPHIYRAEDRMVAIVSRFRGRDELTNRVIEQLARELLILEASDWQFLITTGQAKEYAKRRVLIHSRDFHRLANELVRYVKIGEFDVKLLEELEERDNPFRPVVVGPYVSENPPELEEYVEPPEVPPEKEETEEKPKVLTEKATSLALAVKKVKPVKEETREVKKKAVEASKRGKRKSSKSKRLPRKVSKKAPSKGPSDLLSIKGIGPKTFQKLKRAGVETIEDLKNANIEDLARKTGISTKRLKKFIAQVE.

Catalysis depends on glutamate 183, which acts as the Nucleophile. Residues arginine 261 and glycine 278 each coordinate substrate. Aspartate 354 serves as the catalytic Proton donor. 3 residues coordinate substrate: tryptophan 407, aspartate 467, and glutamine 476. 2 disordered regions span residues 537-563 (PELEEYVEPPEVPPEKEETEEKPKVLT) and 581-627 (EETR…LSIK). 2 stretches are compositionally biased toward basic and acidic residues: residues 549–563 (PPEKEETEEKPKVLT) and 581–595 (EETREVKKKAVEASK). A compositionally biased stretch (basic residues) spans 596–616 (RGKRKSSKSKRLPRKVSKKAP).

It belongs to the glycosyl hydrolase 57 family. Monomer.

It carries out the reaction Transfers a segment of a (1-&gt;4)-alpha-D-glucan chain to a primary hydroxy group in a similar glucan chain.. Catalyzes the formation of branch points in alpha-glucans by cleavage of an alpha-1,4 glycosidic bond and subsequent transfer of the cleaved-off oligosaccharide to a new alpha-1,6 position. The branch chain-length distribution of the reaction products shows degree of polymerization (DP) of 5 to 30, with two local maxima at DP 6 and DP 11. Exhibits an alpha-retaining catalytic mechanism. Does not display alpha-galactosidase or pullulanase activity, since melibiose and pullulan are not substrates. Is not able to catalyze the hydrolysis or transglycosylation of maltoheptaose, suggesting that the TK1436 protein contains neither alpha-amylase nor 4-alpha-glucanotransferase activity. In Thermococcus kodakarensis (strain ATCC BAA-918 / JCM 12380 / KOD1) (Pyrococcus kodakaraensis (strain KOD1)), this protein is 1,4-alpha-glucan branching enzyme TK1436.